Reading from the N-terminus, the 459-residue chain is MGKEKTHINIVVIGHVDSGKSTTTGHLIYKCGGIDKRTIEKFEKEAQEMGKGSFKYAWVLDKLKAERERGITIDIALWKFETAKFYVTIIDAPGHRDFIKNMITGTSQADCAVLVVACGTGEFEAGISKNGQTREHALLAQTLGVKQMIVACNKMDSTEPPFSEKRFEEIITEVKSFIKKIGYNPATIPFVPISGFNGDNMLEPSANMSWYKGWSVERKEGNASGKTLLEALDCIIPPQRPTDRPLRLPLQDVYKIGGIGTVPVGRVETGVIKPGMVVTFAPQNVTTEVKSVEMHHESLPEAQPGDNVGFNVKNVSVKDIRRGSVCSDSKNDPAKESKSFTAQVIVMNHPGQIGAGYTPVLDCHTAHIACKFAELKEKVDRRTGKKVEDPPKFLKSGDAGIVELIPTKPLCVEAFTDYAPLGRFAVRDMRQTVAVGVIKGVTKDDGSGGKVTKSAAKKK.

Positions K5–T242 constitute a tr-type G domain. The segment at G14 to S21 is G1. The tract at residues G70–D74 is G2. The G3 stretch occupies residues D91 to G94. The interval N153–D156 is G4. The G5 stretch occupies residues S194 to F196. 5-glutamyl glycerylphosphorylethanolamine occurs at positions 301 and 374.

This sequence belongs to the TRAFAC class translation factor GTPase superfamily. Classic translation factor GTPase family. EF-Tu/EF-1A subfamily.

It localises to the cytoplasm. Its function is as follows. This protein promotes the GTP-dependent binding of aminoacyl-tRNA to the A-site of ribosomes during protein biosynthesis. This is Elongation factor 1-alpha 2 (eft-2) from Oscheius tipulae.